The sequence spans 127 residues: MNLVFLWAALGGALGSSLRYFVGKMMPSKFLMFESFPLGTFSVNLIGCFVIGLMGHLAAKKVFGDDFGIFFVTGVLGGFTTFSSYGLDTLKLLQKSQYIEAISYVLGTNILGLIGVAIGWFLAKNFV.

Helical transmembrane passes span 3-23, 38-58, 67-87, and 102-122; these read LVFL…YFVG, LGTF…GHLA, FGIF…SYGL, and ISYV…GWFL. Gly77 and Thr80 together coordinate Na(+).

This sequence belongs to the fluoride channel Fluc/FEX (TC 1.A.43) family.

Its subcellular location is the cell inner membrane. It catalyses the reaction fluoride(in) = fluoride(out). Na(+) is not transported, but it plays an essential structural role and its presence is essential for fluoride channel function. In terms of biological role, fluoride-specific ion channel. Important for reducing fluoride concentration in the cell, thus reducing its toxicity. This is Fluoride-specific ion channel FluC from Helicobacter acinonychis (strain Sheeba).